The following is a 120-amino-acid chain: Large ribosomal subunit protein bL19c (120 aa).

Belongs to the bacterial ribosomal protein bL19 family.

The protein resides in the plastid. It is found in the chloroplast. The chain is Large ribosomal subunit protein bL19c from Thalassiosira weissflogii (Marine diatom).